The sequence spans 506 residues: Anaerobic nitric oxide reductase transcription regulator NorR (506 aa).

4-aspartylphosphate is present on D57. The Sigma-54 factor interaction domain maps to 187-416 (MIGLSPAMTQ…LEHAIHRAVV (230 aa)). ATP-binding positions include 215-222 (GETGTGKE) and 278-287 (ADNGTLFLDE). Positions 481–500 (WAASARALETDVANLHRLAK) form a DNA-binding region, H-T-H motif.

The protein operates within nitrogen metabolism; nitric oxide reduction. Required for the expression of anaerobic nitric oxide (NO) reductase, acts as a transcriptional activator for at least the norVW operon. Activation also requires sigma-54. The polypeptide is Anaerobic nitric oxide reductase transcription regulator NorR (Salmonella newport (strain SL254)).